A 383-amino-acid polypeptide reads, in one-letter code: GTP-binding protein 10 (383 aa).

Residues 13–148 form the Obg domain; that stretch reads GNFIDNLRIY…RIIHLDLKLI (136 aa). Residues 149–344 enclose the OBG-type G domain; that stretch reads SDVGLVGFPN…LIGCIRKTMD (196 aa). GTP contacts are provided by residues 155 to 162, 202 to 206, and 278 to 281; these read GFPNAGKS, DLPGL, and NKMD. A disordered region spans residues 362 to 383; the sequence is LQKETSRTVKRNLKNSPQRTHH. The segment covering 369–383 has biased composition (basic residues); that stretch reads TVKRNLKNSPQRTHH.

The protein belongs to the TRAFAC class OBG-HflX-like GTPase superfamily. OBG GTPase family.

The protein localises to the nucleus. It localises to the nucleolus. In terms of biological role, may be involved in the ribosome maturation process. The chain is GTP-binding protein 10 (gtpbp10) from Xenopus tropicalis (Western clawed frog).